A 293-amino-acid polypeptide reads, in one-letter code: 4-hydroxy-tetrahydrodipicolinate synthase (293 aa).

T44 lines the pyruvate pocket. Y132 functions as the Proton donor/acceptor in the catalytic mechanism. Residue K160 is the Schiff-base intermediate with substrate of the active site. Residue I202 participates in pyruvate binding.

It belongs to the DapA family. Homotetramer; dimer of dimers.

The protein resides in the cytoplasm. It catalyses the reaction L-aspartate 4-semialdehyde + pyruvate = (2S,4S)-4-hydroxy-2,3,4,5-tetrahydrodipicolinate + H2O + H(+). It participates in amino-acid biosynthesis; L-lysine biosynthesis via DAP pathway; (S)-tetrahydrodipicolinate from L-aspartate: step 3/4. Catalyzes the condensation of (S)-aspartate-beta-semialdehyde [(S)-ASA] and pyruvate to 4-hydroxy-tetrahydrodipicolinate (HTPA). The protein is 4-hydroxy-tetrahydrodipicolinate synthase of Pelagibacter ubique (strain HTCC1062).